A 180-amino-acid polypeptide reads, in one-letter code: Small ribosomal subunit protein uS5 (180 aa).

The interval 1–26 (MAEEKDKKQSSRRRNNRRTEKESEWQ) is disordered. Basic and acidic residues predominate over residues 17-26 (RRTEKESEWQ). An S5 DRBM domain is found at 25 to 88 (WQERVVQIRR…ADGKKHLVNV (64 aa)).

Belongs to the universal ribosomal protein uS5 family. As to quaternary structure, part of the 30S ribosomal subunit. Contacts proteins S4 and S8.

Functionally, with S4 and S12 plays an important role in translational accuracy. Its function is as follows. Located at the back of the 30S subunit body where it stabilizes the conformation of the head with respect to the body. The chain is Small ribosomal subunit protein uS5 from Synechococcus elongatus (strain ATCC 33912 / PCC 7942 / FACHB-805) (Anacystis nidulans R2).